The following is a 249-amino-acid chain: Serine acetyltransferase (249 aa).

Belongs to the transferase hexapeptide repeat family.

The protein localises to the cytoplasm. It catalyses the reaction L-serine + acetyl-CoA = O-acetyl-L-serine + CoA. The protein operates within amino-acid biosynthesis; L-cysteine biosynthesis; L-cysteine from L-serine: step 1/2. This chain is Serine acetyltransferase (cysE), found in Synechocystis sp. (strain ATCC 27184 / PCC 6803 / Kazusa).